The primary structure comprises 142 residues: Large ribosomal subunit protein uL13 (142 aa).

Belongs to the universal ribosomal protein uL13 family. Part of the 50S ribosomal subunit.

Functionally, this protein is one of the early assembly proteins of the 50S ribosomal subunit, although it is not seen to bind rRNA by itself. It is important during the early stages of 50S assembly. The protein is Large ribosomal subunit protein uL13 of Caldicellulosiruptor bescii (strain ATCC BAA-1888 / DSM 6725 / KCTC 15123 / Z-1320) (Anaerocellum thermophilum).